We begin with the raw amino-acid sequence, 290 residues long: Beta-lactamase OXY-2 (290 aa).

Residues 1–27 (MIKSSWRKIAMLAAAVPLLLASGALWA) form the signal peptide. Residue serine 72 is the Acyl-ester intermediate of the active site. Residue 236–238 (KTG) participates in substrate binding.

It belongs to the class-A beta-lactamase family.

The catalysed reaction is a beta-lactam + H2O = a substituted beta-amino acid. Functionally, hydrolyzes broad-spectrum beta-lactam antibiotics. Active against all third-generation cephalosporins but ceftazidime. The polypeptide is Beta-lactamase OXY-2 (bla) (Klebsiella oxytoca).